We begin with the raw amino-acid sequence, 222 residues long: MFSFKVSRWMGLACFRSLAASSPSIRQKKLMHKLQEEKAFREEMKIFREKIEDFREEMWTFRGKIHAFRGQILGFWEEERPFWEEEKTFWKEEKSFWEMEKSFREEEKTFWKKYRTFWKEDKAFWKEDNALWERDRNLLQEDKALWEEEKALWVEERALLEGEKALWEDKTSLWEEENALWEEERAFWMENNGHIAGEQMLEDGPHNANRGQRLLAFSRGRA.

The stretch at N129–W153 forms a coiled coil.

This Homo sapiens (Human) protein is Coiled-coil domain-containing protein 70.